Here is a 496-residue protein sequence, read N- to C-terminus: Glycerol kinase (496 aa).

Residue T12 coordinates ADP. Residues T12, T13, and S14 each contribute to the ATP site. T12 is a sn-glycerol 3-phosphate binding site. Residue R16 participates in ADP binding. 3 residues coordinate sn-glycerol 3-phosphate: R82, E83, and Y134. Glycerol contacts are provided by R82, E83, and Y134. Position 230 is a phosphohistidine; by HPr (H230). D244 contacts sn-glycerol 3-phosphate. Glycerol-binding residues include D244 and Q245. Residues T266 and G309 each contribute to the ADP site. Positions 266, 309, 313, and 410 each coordinate ATP. The ADP site is built by G410 and N414.

The protein belongs to the FGGY kinase family. Homotetramer and homodimer (in equilibrium). The phosphoenolpyruvate-dependent sugar phosphotransferase system (PTS), including enzyme I, and histidine-containing protein (HPr) are required for the phosphorylation, which leads to the activation of the enzyme.

The catalysed reaction is glycerol + ATP = sn-glycerol 3-phosphate + ADP + H(+). Its pathway is polyol metabolism; glycerol degradation via glycerol kinase pathway; sn-glycerol 3-phosphate from glycerol: step 1/1. Activated by phosphorylation and inhibited by fructose 1,6-bisphosphate (FBP). Functionally, key enzyme in the regulation of glycerol uptake and metabolism. Catalyzes the phosphorylation of glycerol to yield sn-glycerol 3-phosphate. This Bacillus cereus (strain G9842) protein is Glycerol kinase.